Consider the following 136-residue polypeptide: Large ribosomal subunit protein uL16 (136 aa).

It belongs to the universal ribosomal protein uL16 family. In terms of assembly, part of the 50S ribosomal subunit.

Binds 23S rRNA and is also seen to make contacts with the A and possibly P site tRNAs. In Pelagibacter ubique (strain HTCC1062), this protein is Large ribosomal subunit protein uL16.